The primary structure comprises 72 residues: Translation initiation factor IF-1 (72 aa).

The region spanning 1-72 (MAKADVIEVE…TKGRITFRFK (72 aa)) is the S1-like domain.

This sequence belongs to the IF-1 family. In terms of assembly, component of the 30S ribosomal translation pre-initiation complex which assembles on the 30S ribosome in the order IF-2 and IF-3, IF-1 and N-formylmethionyl-tRNA(fMet); mRNA recruitment can occur at any time during PIC assembly.

The protein localises to the cytoplasm. In terms of biological role, one of the essential components for the initiation of protein synthesis. Stabilizes the binding of IF-2 and IF-3 on the 30S subunit to which N-formylmethionyl-tRNA(fMet) subsequently binds. Helps modulate mRNA selection, yielding the 30S pre-initiation complex (PIC). Upon addition of the 50S ribosomal subunit IF-1, IF-2 and IF-3 are released leaving the mature 70S translation initiation complex. The chain is Translation initiation factor IF-1 from Limosilactobacillus reuteri (strain DSM 20016) (Lactobacillus reuteri).